A 665-amino-acid chain; its full sequence is Fermitin family homolog 3 (665 aa).

Y11 is subject to Phosphotyrosine. Positions 229–556 (WLDSSRCLMQ…SLPDFGISYV (328 aa)) constitute an FERM domain. The 100-residue stretch at 354–453 (DHLRIFRPRK…WMAGCRLASK (100 aa)) folds into the PH domain. At Y502 the chain carries Phosphotyrosine. T589 carries the post-translational modification Phosphothreonine.

It belongs to the kindlin family. In terms of assembly, interacts with ITGB1, ITGB2 and ITGB3 (via cytoplasmic tails).

Its subcellular location is the cell projection. It localises to the podosome. Its function is as follows. Plays a central role in cell adhesion in hematopoietic cells. Acts by activating the integrin beta-1-3 (ITGB1, ITGB2 and ITGB3). Required for integrin-mediated platelet adhesion and leukocyte adhesion to endothelial cells. Required for activation of integrin beta-2 (ITGB2) in polymorphonuclear granulocytes (PMNs). This chain is Fermitin family homolog 3 (FERMT3), found in Bos taurus (Bovine).